A 171-amino-acid chain; its full sequence is Cation channel sperm-associated auxiliary subunit TMEM249 (171 aa).

Residues 1-2 (ML) lie on the Cytoplasmic side of the membrane. Residues 3 to 17 (FIICLVFISCNVLRE) traverse the membrane as a helical segment. Residues 18-28 (VKYQETWCFPA) lie on the Extracellular side of the membrane. Residues 29 to 40 (YGMVIGLWLMLS) traverse the membrane as a helical segment. The Cytoplasmic segment spans residues 41–171 (SIPQRRLVLN…TKSSVNDLDV (131 aa)).

As to quaternary structure, component of the CatSper complex or CatSpermasome composed of the core pore-forming members CATSPER1, CATSPER2, CATSPER3 and CATSPER4 as well as auxiliary members CATSPERB, CATSPERG2, CATSPERD, CATSPERE, CATSPERZ, C2CD6/CATSPERT, SLCO6C1, TMEM249, TMEM262 and EFCAB9. HSPA1 may be an additional auxiliary complex member. The core complex members CATSPER1, CATSPER2, CATSPER3 and CATSPER4 form a heterotetrameric channel. The auxiliary CATSPERB, CATSPERG2, CATSPERD and CATSPERE subunits form a pavilion-like structure over the pore which stabilizes the complex through interactions with CATSPER4, CATSPER3, CATSPER1 and CATSPER2 respectively. SLCO6C1 interacts with CATSPERE and TMEM262/CATSPERH interacts with CATSPERB, further stabilizing the complex. C2CD6/CATSPERT interacts at least with CATSPERD and is required for targeting the CatSper complex in the flagellar membrane.

It localises to the cell projection. The protein resides in the cilium. Its subcellular location is the flagellum membrane. Functionally, auxiliary component of the CatSper complex, a complex involved in sperm cell hyperactivation. This chain is Cation channel sperm-associated auxiliary subunit TMEM249, found in Mus musculus (Mouse).